A 143-amino-acid chain; its full sequence is 18.1 kDa class I heat shock protein (143 aa).

The 115-residue stretch at 29-143 (ENSAFVSTRI…PEVKSIEISS (115 aa)) folds into the sHSP domain.

Belongs to the small heat shock protein (HSP20) family. In terms of assembly, forms oligomeric structures.

Its subcellular location is the cytoplasm. The polypeptide is 18.1 kDa class I heat shock protein (HSP18.1) (Medicago sativa (Alfalfa)).